We begin with the raw amino-acid sequence, 415 residues long: Putative glutamate--cysteine ligase 2 (415 aa).

The protein belongs to the glutamate--cysteine ligase type 2 family. YbdK subfamily.

It carries out the reaction L-cysteine + L-glutamate + ATP = gamma-L-glutamyl-L-cysteine + ADP + phosphate + H(+). In terms of biological role, ATP-dependent carboxylate-amine ligase which exhibits weak glutamate--cysteine ligase activity. This chain is Putative glutamate--cysteine ligase 2, found in Bordetella petrii (strain ATCC BAA-461 / DSM 12804 / CCUG 43448).